Reading from the N-terminus, the 1755-residue chain is Deleted in lung and esophageal cancer protein 1 (1755 aa).

Residues 1–12 (METRSSKTRRSL) show a composition bias toward basic residues. Disordered stretches follow at residues 1–39 (METRSSKTRRSLASRTNECQGTMWAPTSPPAGSSSPSQP), 1339–1360 (PGPSSSSEFSHETDSSVEGSSS), and 1529–1553 (SQDGASQDHRAPGPGQKQECEEETA). Low complexity predominate over residues 30–39 (PAGSSSPSQP).

In terms of assembly, interacts with alpha- and beta-tubulin. Interacts with BBS2, BBS4, BBS5, MKKS, TCP1, CCT2, CCT3, CCT4, CCT5 and CCT7. As to expression, expressed in all tissues examined. Expression is highest in prostate and testis.

The protein localises to the cytoplasm. Functionally, essential for spermatogenesis and male fertility. May play an important role in sperm head and tail formation. May act as a tumor suppressor by inhibiting cell proliferation. This Homo sapiens (Human) protein is Deleted in lung and esophageal cancer protein 1.